The sequence spans 1700 residues: uncharacterized protein (1700 aa).

The helical transmembrane segment at Ala-986–Val-1006 threads the bilayer. Coiled-coil stretches lie at residues Asp-1246–Lys-1278 and Gln-1657–Asp-1684. The tract at residues Asp-1650–Glu-1700 is disordered. Positions Thr-1651–Glu-1700 are enriched in acidic residues.

It is found in the host membrane. The protein localises to the virion. This is an uncharacterized protein from Acanthamoeba polyphaga (Amoeba).